The following is a 293-amino-acid chain: MAQPMRFMLNHIETESYGAFTPQNLSPLINRAIPHTRAQISGSPVVAVGRGSSGRTFFGVNVELPGLPLDHSIHAEQFLLANLALHFEQKLECIAISTNGYYFQEPCGHCCQLLHKIRDMSDTKILLTNPTGQKGTYMNLSTFLPQGLISQANVPRLLERNFNCIELINHSLYMDICSYSEHCNHLNCRALKAATISYAPDSKCPSGVALIDHRGKVYSGGYMESVAHNTSLGPVQAALVDFVANGDGQEFKNIVEAVLVEKKCGVLSQEATARMILEKIADPDCIFRVLHCK.

CMP/dCMP-type deaminase domains are found at residues 20 to 151 (FTPQ…LISQ) and 181 to 293 (EHCN…LHCK). 61–63 (NVE) provides a ligand contact to substrate. Histidine 74 is a binding site for Zn(2+). Glutamate 76 serves as the catalytic Proton donor. Residues cysteine 107 and cysteine 110 each coordinate Zn(2+).

Belongs to the cytidine and deoxycytidylate deaminase family. As to quaternary structure, homodimer. Zn(2+) is required as a cofactor.

It carries out the reaction cytidine + H2O + H(+) = uridine + NH4(+). The catalysed reaction is 2'-deoxycytidine + H2O + H(+) = 2'-deoxyuridine + NH4(+). This enzyme scavenges exogenous and endogenous cytidine and 2'-deoxycytidine for UMP synthesis. This Arabidopsis thaliana (Mouse-ear cress) protein is Cytidine deaminase 8 (CDA8).